A 921-amino-acid chain; its full sequence is Retinoblastoma-associated protein (921 aa).

The segment at 1–36 (MPPKAPRRAAAAEPPPPPPPPPREDDPAQDSGPEEL) is disordered. Pro-2 is subject to N,N-dimethylproline; by NTM1. 2 positions are modified to phosphoserine: Ser-31 and Ser-243. 4 positions are modified to phosphothreonine: Thr-246, Thr-350, Thr-364, and Thr-367. Positions 341 to 360 (PIDSFETERTPRKNNPDEEA) are disordered. The segment covering 346–356 (ETERTPRKNNP) has biased composition (basic and acidic residues). The segment at 367-573 (TPVRTVMNTI…FDLIKQSKDG (207 aa)) is domain A. The pocket; binds T and E1A stretch occupies residues 367–764 (TPVRTVMNTI…QRLKTNILQY (398 aa)). Phosphoserine; by CDK2 is present on Ser-561. Positions 574-632 (EGPDNLEPACPLSLPLQGNHTAADMYLSPLRSPKKRTSTTRVNSAANTETQAASAFHTQ) are spacer. Phosphoserine occurs at positions 601, 605, and 617. The segment at 633–764 (KPLKSTSLAL…QRLKTNILQY (132 aa)) is domain B. Residues 756–921 (RLKTNILQYA…SKDVSNKEEK (166 aa)) form an interaction with LIMD1 region. Residues 764–921 (YASTRPPTLS…SKDVSNKEEK (158 aa)) are domain; mediates interaction with E4F1. Phosphoserine is present on residues Ser-773, Ser-781, Ser-788, and Ser-800. Lys-803 carries the post-translational modification N6-methyllysine; by SMYD2. Ser-804 bears the Phosphoserine mark. A phosphothreonine mark is found at Thr-814, Thr-816, Thr-819, and Thr-834. Position 848 is a phosphoserine (Ser-848). Residue Lys-853 is modified to N6-methyllysine; by SMYD2. The Bipartite nuclear localization signal signature appears at 853-869 (KRSAEGGNPPKPLKKLR). Lys-866 and Lys-867 each carry N6-acetyllysine; by PCAF. The segment at 872–921 (IEGADEADGSKHLPAESKFQQKLAEMTSTRTRMQKQRMNESKDVSNKEEK) is disordered. A compositionally biased stretch (basic and acidic residues) spans 908 to 921 (RMNESKDVSNKEEK).

Belongs to the retinoblastoma protein (RB) family. The hypophosphorylated form interacts with and sequesters the E2F1 transcription factor, thereby inhibiting E2F1 transcription. Interacts with heterodimeric E2F/DP transcription factor complexes containing TFDP1 and either E2F1/E2F, E2F3, E2F4 or E2F5, or TFDP2 and E2F4. Interacts (when hyperphosphorylated and hypophosphorylated) with PKP3; the interaction inhibits RB1 interaction with and repression of the transcription factor E2F1, potentially via sequestering RB1 to the cytoplasm. The unphosphorylated form interacts with EID1, ARID3B, KDM5A, SUV39H1, MJD2A/JHDM3A and THOC1. Interacts with the N-terminal domain of TAF1. Interacts with SNW1, ATAD5, AATF, DNMT1, LIN9, LMNA, KMT5B, KMT5C, PELP1, UHRF2, TMPO-alpha and USP4. Interacts with GRIP1 and UBR4. Interacts with ARID4A and KDM5B. Interacts with E4F1 and LIMD1. Interacts with SMARCA4/BRG1 and HDAC1. Interacts with USP4. Interacts (when methylated at Lys-853) with L3MBTL1. Binds to CDK1 and CDK2. Interacts with CHEK2; phosphorylates RB1. Interacts with PRMT2. Interacts with CEBPA. P-TEFB complex interacts with RB1; promotes phosphorylation of RB1. Interacts with RBBP9; the interaction disrupts RB1 binding to E2F1. Interacts with KAT2B/PCAF and EP300/P300. Interacts with PAX5. Interacts (phosphorylated and unphosphorylated) with BLCAP. May interact with NDC80. In terms of assembly, (Microbial infection) Interacts with adenovirus E1a protein. As to quaternary structure, (Microbial infection) Interacts with SV40 large T antigen. Post-translationally, phosphorylated. Phosphorylated by CDK6 and CDK4, and subsequently by CDK2 at Ser-561 in G1, thereby releasing E2F1 which is then able to activate cell growth. Dephosphorylated at the late M phase. Phosphorylation of threonine residues in domain C promotes interaction between the C-terminal domain C and the Pocket domain, and thereby inhibits interactions with heterodimeric E2F/DP transcription factor complexes. Dephosphorylated at Ser-788 by calcineruin upon calcium stimulation. CDK3/cyclin-C-mediated phosphorylation at Ser-800 and Ser-804 is required for G0-G1 transition. Phosphorylated by CDK1 and CDK2 upon TGFB1-mediated apoptosis. In terms of processing, monomethylation at Lys-803 by SMYD2 enhances phosphorylation at Ser-800 and Ser-804, and promotes cell cycle progression. Monomethylation at Lys-853 by SMYD2 promotes interaction with L3MBTL1. N-terminus is methylated by METTL11A/NTM1. Acetylated in the skin. Acetylation at Lys-866 and Lys-867 regulates subcellular localization during keratinocytes differentiation. As to expression, expressed in the cell nuclei of renal tubules, hepatocytes and skeletal muscles. Expressed in skin (at protein level).

Its subcellular location is the nucleus. The protein resides in the cytoplasm. In terms of biological role, tumor suppressor that is a key regulator of the G1/S transition of the cell cycle. The hypophosphorylated form binds transcription regulators of the E2F family, preventing transcription of E2F-responsive genes. Both physically blocks E2Fs transactivating domain and recruits chromatin-modifying enzymes that actively repress transcription. Cyclin and CDK-dependent phosphorylation of RB1 induces its dissociation from E2Fs, thereby activating transcription of E2F responsive genes and triggering entry into S phase. RB1 also promotes the G0-G1 transition upon phosphorylation and activation by CDK3/cyclin-C. Directly involved in heterochromatin formation by maintaining overall chromatin structure and, in particular, that of constitutive heterochromatin by stabilizing histone methylation. Recruits and targets histone methyltransferases SUV39H1, KMT5B and KMT5C, leading to epigenetic transcriptional repression. Controls histone H4 'Lys-20' trimethylation. Inhibits the intrinsic kinase activity of TAF1. Mediates transcriptional repression by SMARCA4/BRG1 by recruiting a histone deacetylase (HDAC) complex to the c-FOS promoter. In resting neurons, transcription of the c-FOS promoter is inhibited by BRG1-dependent recruitment of a phospho-RB1-HDAC1 repressor complex. Upon calcium influx, RB1 is dephosphorylated by calcineurin, which leads to release of the repressor complex. The protein is Retinoblastoma-associated protein (Rb1) of Mus musculus (Mouse).